A 181-amino-acid chain; its full sequence is ADP-ribosylation factor-like protein 1 (181 aa).

Glycine 2 carries N-myristoyl glycine lipidation. GTP contacts are provided by residues 24–31, 45–48, glycine 70, 126–129, and 160–161; these read GLDGAGKT, TIPT, NKQD, and AT. Positions 31 and 48 each coordinate Mg(2+).

It belongs to the small GTPase superfamily. Arf family. The GTP-bound form interacts with GOLGA1. The GTP-bound form interacts with GOLGA4 and RGPD8. The GTP-bound form directly interacts with ARFIP2. Binds to SCOC, preferentially in its GTP-bound form. May interact with UNC119. Interacts with ARFIP1; this interaction directs ARFIP1 to the trans-Golgi membranes. Interacts with ARFGEF1 (via N-terminus). In terms of tissue distribution, detected in heart, liver, lung and liver (at protein level). Detected in fetal heart, lung, liver and kidney. Detected in adult heart, placenta, lung, liver, skeletal muscle, kidney and pancreas.

It localises to the golgi apparatus membrane. Its subcellular location is the golgi apparatus. The protein resides in the trans-Golgi network membrane. It is found in the membrane. GTP-binding protein that recruits several effectors, such as golgins, arfaptins and Arf-GEFs to the trans-Golgi network, and modulates their functions at the Golgi complex. Plays thereby a role in a wide range of fundamental cellular processes, including cell polarity, innate immunity, or protein secretion mediated by arfaptins, which were shown to play a role in maintaining insulin secretion from pancreatic beta cells. In Homo sapiens (Human), this protein is ADP-ribosylation factor-like protein 1 (ARL1).